The following is a 64-amino-acid chain: Large ribosomal subunit protein bL33 (64 aa).

Belongs to the bacterial ribosomal protein bL33 family.

The sequence is that of Large ribosomal subunit protein bL33 from Synechococcus sp. (strain JA-3-3Ab) (Cyanobacteria bacterium Yellowstone A-Prime).